Consider the following 477-residue polypeptide: Bifunctional protein HldE (477 aa).

Positions 1 to 318 are ribokinase; sequence MKVTLSEFER…ENAVRGRADT (318 aa). At K179 the chain carries N6-acetyllysine. Position 195 to 198 (195 to 198) interacts with ATP; it reads NLSE. The active site involves D264. The tract at residues 344–477 is cytidylyltransferase; the sequence is MTNGVFDILH…IKKIQQDKKG (134 aa).

It in the N-terminal section; belongs to the carbohydrate kinase PfkB family. In the C-terminal section; belongs to the cytidylyltransferase family. As to quaternary structure, homodimer.

It catalyses the reaction D-glycero-beta-D-manno-heptose 7-phosphate + ATP = D-glycero-beta-D-manno-heptose 1,7-bisphosphate + ADP + H(+). The enzyme catalyses D-glycero-beta-D-manno-heptose 1-phosphate + ATP + H(+) = ADP-D-glycero-beta-D-manno-heptose + diphosphate. It participates in nucleotide-sugar biosynthesis; ADP-L-glycero-beta-D-manno-heptose biosynthesis; ADP-L-glycero-beta-D-manno-heptose from D-glycero-beta-D-manno-heptose 7-phosphate: step 1/4. The protein operates within nucleotide-sugar biosynthesis; ADP-L-glycero-beta-D-manno-heptose biosynthesis; ADP-L-glycero-beta-D-manno-heptose from D-glycero-beta-D-manno-heptose 7-phosphate: step 3/4. Its function is as follows. Catalyzes the phosphorylation of D-glycero-D-manno-heptose 7-phosphate at the C-1 position to selectively form D-glycero-beta-D-manno-heptose-1,7-bisphosphate. Catalyzes the ADP transfer from ATP to D-glycero-beta-D-manno-heptose 1-phosphate, yielding ADP-D-glycero-beta-D-manno-heptose. This chain is Bifunctional protein HldE, found in Shigella boydii serotype 18 (strain CDC 3083-94 / BS512).